The sequence spans 87 residues: Keratin-associated protein 7-1 (87 aa).

The tract at residues 43–84 is 11 X 2 AA repeats of G-[YCGS]; sequence GCGCNGYSSLGYSFGGSNINNLGGCYGGSFYRPWGSGSGFGY.

The protein belongs to the KRTAP type 7 family. As to quaternary structure, interacts with hair keratins. As to expression, expressed in the upper portion of the hair cortex.

Its function is as follows. In the hair cortex, hair keratin intermediate filaments are embedded in an interfilamentous matrix, consisting of hair keratin-associated proteins (KRTAP), which are essential for the formation of a rigid and resistant hair shaft through their extensive disulfide bond cross-linking with abundant cysteine residues of hair keratins. The matrix proteins include the high-sulfur and high-glycine-tyrosine keratins. The chain is Keratin-associated protein 7-1 (KRTAP7-1) from Homo sapiens (Human).